Consider the following 1101-residue polypeptide: ATP-citrate synthase (1101 aa).

In terms of domain architecture, ATP-grasp spans 4–265; it reads KAISEQTGKE…LDAKSGASLK (262 aa). The ATP site is built by Lys58, Arg66, Gly67, Pro109, Val111, and Glu118. At Tyr131 the chain carries Phosphotyrosine. Asp216 contributes to the ATP binding site. Positions 257, 260, and 262 each coordinate Mg(2+). Phosphoserine is present on Ser263. Positions 309, 346, 348, 364, and 379 each coordinate citrate. Positions 441–457 are enriched in low complexity; the sequence is ASGSTSTPAPSRTASFS. Positions 441 to 487 are disordered; it reads ASGSTSTPAPSRTASFSESRADEVAPAKKAKPAMPQDSVPSPRSLQG. Thr447 carries the post-translational modification Phosphothreonine. The residue at position 451 (Ser451) is a Phosphoserine. Residue Ser455 is modified to Phosphoserine; by PKA and PKB/AKT1 or PKB/AKT2 or BCKDK. Residues Ser459 and Ser481 each carry the phosphoserine modification. Over residues 478-487 the composition is skewed to polar residues; it reads SVPSPRSLQG. Lys540, Lys546, and Lys554 each carry N6-acetyllysine; alternate. Glycyl lysine isopeptide (Lys-Gly) (interchain with G-Cter in ubiquitin); alternate cross-links involve residues Lys540, Lys546, and Lys554. At Thr639 the chain carries Phosphothreonine. At Ser663 the chain carries Phosphoserine. The residue at position 682 (Tyr682) is a Phosphotyrosine. The Tele-phosphohistidine intermediate role is filled by His760. 779 to 789 lines the CoA pocket; the sequence is LKEAGVFVPRS. Residue Ser839 is modified to Phosphoserine. Residues Lys948, Lys968, Lys978, and Lys1077 each carry the N6-acetyllysine modification. Ser1100 carries the phosphoserine modification.

It in the N-terminal section; belongs to the succinate/malate CoA ligase beta subunit family. The protein in the C-terminal section; belongs to the succinate/malate CoA ligase alpha subunit family. As to quaternary structure, homotetramer. Requires Mg(2+) as cofactor. Phosphorylated by PKA and GSK3 in a sequential manner; phosphorylation results in activation of its activity. Phosphorylation on Thr-447 and Ser-451 depends on the phosphorylation state of Ser-455. Phosphorylation on Ser-455 is decreased by prior phosphorylation on the other 2 residues. Phosphorylated at Ser-455 by BCKDK and dephosphorylated by protein phosphatase PPM1K. In terms of processing, ISGylated. Post-translationally, acetylated at Lys-540, Lys-546 and Lys-554 by KAT2B/PCAF. Acetylation is promoted by glucose and stabilizes the protein, probably by preventing ubiquitination at the same sites. Acetylation promotes de novo lipid synthesis. Deacetylated by SIRT2. Ubiquitinated at Lys-540, Lys-546 and Lys-554 by the BCR(KLHL25) E3 ubiquitin ligase complex and UBR4, leading to its degradation. Ubiquitination is probably inhibited by acetylation at same site. BCR(KLHL25)-mediated degradation of ACLY promotes fatty acid oxidation and is required for differentiation of inducible regulatory T (iTreg) cells.

The protein localises to the cytoplasm. The protein resides in the cytosol. The catalysed reaction is oxaloacetate + acetyl-CoA + ADP + phosphate = citrate + ATP + CoA. Its activity is regulated as follows. Phosphorylation results in activation of its activity. Glucose 6-phosphate, fructose 6-phosphate, fructose 2,6-bisphosphate, ribulose 5-phosphate, and fructose 1,6-bisphosphate also act as activators. Its function is as follows. Catalyzes the cleavage of citrate into oxaloacetate and acetyl-CoA, the latter serving as common substrate in multiple biochemical reactions in protein, carbohydrate and lipid metabolism. The sequence is that of ATP-citrate synthase (ACLY) from Homo sapiens (Human).